A 1026-amino-acid chain; its full sequence is UPF0182 protein FRAAL6027 (1026 aa).

Transmembrane regions (helical) follow at residues Ala13–Phe33, Ile60–Leu80, Tyr108–Ala128, Phe167–His187, Ala208–Asp228, Ala250–Ile270, and Leu283–Ile303. Residues Ala877 to Thr888 show a composition bias toward low complexity. Disordered stretches follow at residues Ala877–Ala916 and Leu958–Gly1026. Residues Thr889–Gly903 are compositionally biased toward gly residues. The segment covering Pro970–Gly1001 has biased composition (low complexity). Residues Pro1016 to Gly1026 are compositionally biased toward pro residues.

Belongs to the UPF0182 family.

The protein resides in the cell membrane. The polypeptide is UPF0182 protein FRAAL6027 (Frankia alni (strain DSM 45986 / CECT 9034 / ACN14a)).